The chain runs to 492 residues: Cholesteryl ester transfer protein (492 aa).

The N-terminal stretch at 1–17 is a signal peptide; sequence MLAVTLLSLALLGSTCA. An intrachain disulfide couples Cys160 to Cys201. An N-linked (GlcNAc...) asparagine glycan is attached at Asn257.

The protein belongs to the BPI/LBP/Plunc superfamily. BPI/LBP family.

The protein localises to the secreted. It catalyses the reaction cholesteryl (9Z-octadecenoate)(in) = cholesteryl (9Z-octadecenoate)(out). It carries out the reaction 1,2,3-tri-(9Z-octadecenoyl)-glycerol(in) = 1,2,3-tri-(9Z-octadecenoyl)-glycerol(out). The catalysed reaction is cholesteryl (9Z,12Z)-octadecadienoate(in) = cholesteryl (9Z,12Z)-octadecadienoate(out). In terms of biological role, involved in the transfer of neutral lipids, including cholesteryl ester and triglyceride, among lipoprotein particles. Allows the net movement of cholesteryl ester from high density lipoproteins/HDL to triglyceride-rich very low density lipoproteins/VLDL, and the equimolar transport of triglyceride from VLDL to HDL. Regulates the reverse cholesterol transport, by which excess cholesterol is removed from peripheral tissues and returned to the liver for elimination. This Cricetulus griseus (Chinese hamster) protein is Cholesteryl ester transfer protein.